A 278-amino-acid chain; its full sequence is MKVIEKIEEMKKISREILESKKAIGFVPTMGFLHEGHLSLVKAAKSENDITVVSIFVNPTQFGPNEDYNNYPRDLERDLSMLKDMEVDYVFVPSVEEMYPDSFSTYVEEIKLSRFLCGASRPGHFRGVCTVVTKLFNIVKPTRAYFGQKDAQQFRVLRRMVRDLNMDVELVEMPIVREPDGLALSSRNTYLNDEERKEAVRLYKSLLKAKELIESGEKDVEIIKNEMKKILTHPLLRIDYIEIVDEENLEPVEKIDRRVIIAIAVFVGRARLIDNMII.

Met30–His37 is a binding site for ATP. Catalysis depends on His37, which acts as the Proton donor. Gln61 serves as a coordination point for (R)-pantoate. Gln61 contacts beta-alanine. ATP is bound at residue Gly147 to Asp150. Position 153 (Gln153) interacts with (R)-pantoate. Residues Val176 and Leu184–Arg187 contribute to the ATP site.

It belongs to the pantothenate synthetase family. Homodimer.

It localises to the cytoplasm. It catalyses the reaction (R)-pantoate + beta-alanine + ATP = (R)-pantothenate + AMP + diphosphate + H(+). It functions in the pathway cofactor biosynthesis; (R)-pantothenate biosynthesis; (R)-pantothenate from (R)-pantoate and beta-alanine: step 1/1. Its function is as follows. Catalyzes the condensation of pantoate with beta-alanine in an ATP-dependent reaction via a pantoyl-adenylate intermediate. The chain is Pantothenate synthetase from Thermosipho africanus (strain TCF52B).